We begin with the raw amino-acid sequence, 299 residues long: tRNA uridine(34) hydroxylase (299 aa).

The Rhodanese domain occupies 132-226; the sequence is AGRPVVMLDT…YFEEVGGAHY (95 aa). Residue cysteine 186 is the Cysteine persulfide intermediate of the active site.

The protein belongs to the TrhO family.

The enzyme catalyses uridine(34) in tRNA + AH2 + O2 = 5-hydroxyuridine(34) in tRNA + A + H2O. Its function is as follows. Catalyzes oxygen-dependent 5-hydroxyuridine (ho5U) modification at position 34 in tRNAs. This Burkholderia mallei (strain NCTC 10247) protein is tRNA uridine(34) hydroxylase.